The sequence spans 160 residues: Large ribosomal subunit protein eL21A (160 aa).

The segment at 114–138 (AKRKEAKAQGKTVQLRRQPAPPAKA) is disordered.

The protein belongs to the eukaryotic ribosomal protein eL21 family. In terms of assembly, component of the large ribosomal subunit (LSU). Mature yeast ribosomes consist of a small (40S) and a large (60S) subunit. The 40S small subunit contains 1 molecule of ribosomal RNA (18S rRNA) and at least 33 different proteins. The large 60S subunit contains 3 rRNA molecules (25S, 5.8S and 5S rRNA) and at least 46 different proteins.

It is found in the cytoplasm. Component of the ribosome, a large ribonucleoprotein complex responsible for the synthesis of proteins in the cell. The small ribosomal subunit (SSU) binds messenger RNAs (mRNAs) and translates the encoded message by selecting cognate aminoacyl-transfer RNA (tRNA) molecules. The large subunit (LSU) contains the ribosomal catalytic site termed the peptidyl transferase center (PTC), which catalyzes the formation of peptide bonds, thereby polymerizing the amino acids delivered by tRNAs into a polypeptide chain. The nascent polypeptides leave the ribosome through a tunnel in the LSU and interact with protein factors that function in enzymatic processing, targeting, and the membrane insertion of nascent chains at the exit of the ribosomal tunnel. In Schizosaccharomyces pombe (strain 972 / ATCC 24843) (Fission yeast), this protein is Large ribosomal subunit protein eL21A (rpl2101).